The sequence spans 241 residues: Accessory protein p30II (241 aa).

Short sequence motifs (nuclear localization signal) lie at residues 73–78 and 91–98; these read RRCRSR and GPRRSRPR. Residues 86–153 are disordered; sequence AFPPGGPRRS…HRNSPTDTKL (68 aa). Over residues 107–138 the composition is skewed to low complexity; the sequence is PSSTVSSSSLSFNSSSKDNSPSTNSSTSRSSG. The short motif at 175–184 is the Mitochondrial targeting signal element; sequence LRVWRLCTRR.

This sequence belongs to the HTLV-1 accessory protein p30II family. As to quaternary structure, p30II binds to the KIX domains of CREBBP and EP300.

It is found in the host nucleus. It localises to the host nucleolus. Its subcellular location is the host mitochondrion inner membrane. P30II is a multifunctional regulator that sequesters EP300/CREBBP and down-regulates CREB-responsive element (CRE) and Tax-responsive element (TRE) mediated transcription. Specifically binds and represses tax/rex mRNA nuclear export. Since Tax and Rex are positive regulators of viral gene expression, their inhibition by p30II reduces virion production, and allows the virus to escape the host immune surveillance and persist latently in an immune-competent host. Its function is as follows. p13II increases mitochondrial permeability to monovalent cations, producing a rapid, membrane potential-dependent influx of potassium. This could involve a channel-forming activity. Interferes with cell proliferation and transformation and promotes apoptosis induced by ceramide and Fas ligand, probably using the Ras signaling. This Human T-cell leukemia virus 1 (isolate Caribbea HS-35 subtype A) (HTLV-1) protein is Accessory protein p30II.